The primary structure comprises 786 residues: Mitochondrial intermediate peptidase (786 aa).

Residues 1 to 29 constitute a mitochondrion transit peptide; that stretch reads MSSILLRSYRHHAKVWTRPSSKSSFIRSL. H567 contributes to the Zn(2+) binding site. The active site involves E568. Residues H571 and H574 each contribute to the Zn(2+) site.

The protein belongs to the peptidase M3 family. It depends on Zn(2+) as a cofactor.

The protein resides in the mitochondrion matrix. The enzyme catalyses Release of an N-terminal octapeptide as second stage of processing of some proteins imported into the mitochondrion.. Cleaves proteins, imported into the mitochondrion, to their mature size. While most mitochondrial precursor proteins are processed to the mature form in one step by mitochondrial processing peptidase (MPP), the sequential cleavage by MIP of an octapeptide after initial processing by MPP is a required step for a subgroup of nuclear-encoded precursor proteins destined for the matrix or the inner membrane. This chain is Mitochondrial intermediate peptidase (OCT1), found in Meyerozyma guilliermondii (strain ATCC 6260 / CBS 566 / DSM 6381 / JCM 1539 / NBRC 10279 / NRRL Y-324) (Yeast).